A 329-amino-acid polypeptide reads, in one-letter code: MAAGKAASKPSLWQNERVRFAVCFCGVFVCYFYYGILQETITRADYTHAGKKEKFRYATTLVFIQCIINAAFARLLIQFFEGSKQDHTRSWLYGLCSLSYLGAMVSSNSALQYVNYPTQVLGKSCKPIPVMILGVTILRKKYPMAKYLCVFLIVGGVALFLYKPNKGSSTSDEHVFGFGEMLLLLSLTLDGLTGVVQDHMRGRFQTGANHMMLNVNMWSTLVLGIAVLWSGEVWEFLAFTDRYPSIIYNILLFGITSALGQTFIFMTVVYFGPLTCSIVTTTRKFFTILGSVLLFGNVISHMQWFGTILVFLGLGLDAKFGKSPKKTTH.

Helical transmembrane passes span 21-41, 60-80, 91-111, 142-162, 175-195, 220-240, 250-270, and 292-312; these read AVCF…QETI, TLVF…IQFF, WLYG…NSAL, YPMA…LFLY, VFGF…LTGV, TLVL…LAFT, ILLF…TVVY, and VLLF…LVFL. Residues 325–329 carry the Di-lysine motif motif; the sequence is KKTTH.

This sequence belongs to the nucleotide-sugar transporter family. SLC35B subfamily.

Its subcellular location is the endoplasmic reticulum membrane. Functionally, probable sugar transporter. This Danio rerio (Zebrafish) protein is Solute carrier family 35 member B1 (slc35b1).